Reading from the N-terminus, the 61-residue chain is DGYIRRRDGCKVSCLFGNEGCDKECKAYGGSYGYCWTWGLACWCEGLPDDKTWKSETNTCG.

An LCN-type CS-alpha/beta domain is found at 1–61 (DGYIRRRDGC…TWKSETNTCG (61 aa)). 4 disulfide bridges follow: cysteine 10-cysteine 60, cysteine 14-cysteine 35, cysteine 21-cysteine 42, and cysteine 25-cysteine 44.

The protein belongs to the long (4 C-C) scorpion toxin superfamily. Sodium channel inhibitor family. Beta subfamily. Expressed by the venom gland.

It is found in the secreted. Functionally, depressant insect beta-toxins cause a transient contraction paralysis followed by a slow flaccid paralysis. They bind voltage-independently at site-4 of sodium channels (Nav) and shift the voltage of activation toward more negative potentials thereby affecting sodium channel activation and promoting spontaneous and repetitive firing. This toxin is active only on insects. The protein is Beta-insect depressant toxin BaIT2 of Buthacus arenicola (North African scorpion).